The primary structure comprises 329 residues: Centromere protein L (329 aa).

A phosphoserine mark is found at serine 40 and serine 54.

Belongs to the CENP-L/IML3 family. Component of the CENPA-CAD complex, composed of CENPI, CENPK, CENPL, CENPO, CENPP, CENPQ, CENPR and CENPS. The CENPA-CAD complex interacts with the CENPA-NAC complex, at least composed of CENPA, CENPC, CENPH, CENPM, CENPN, CENPT and CENPU.

The protein resides in the nucleus. It localises to the chromosome. Its subcellular location is the centromere. Functionally, component of the CENPA-CAD (nucleosome distal) complex, a complex recruited to centromeres which is involved in assembly of kinetochore proteins, mitotic progression and chromosome segregation. May be involved in incorporation of newly synthesized CENPA into centromeres via its interaction with the CENPA-NAC complex. The protein is Centromere protein L (Cenpl) of Mus musculus (Mouse).